Consider the following 489-residue polypeptide: Blue-light-activated histidine kinase (489 aa).

One can recognise a PAS domain in the interval Ala-19 to Lys-93. Cys-69 carries the S-4a-FMN cysteine modification. PAC domains are found at residues Lys-93–Lys-147 and Tyr-232–Leu-281. The tract at residues Asn-259 to Thr-341 is HWE histidine kinase domain. The residue at position 288 (His-288) is a Phosphohistidine; by autocatalysis.

Post-translationally, FMN binds covalently to cysteine after exposure to blue light and this bond is spontaneously broken in the dark.

The enzyme catalyses ATP + protein L-histidine = ADP + protein N-phospho-L-histidine.. Its function is as follows. Photosensitive kinase that is involved in increased bacterial virulence upon exposure to light. Once ejected from an infected animal host, sunlight acts as an environmental signal that increases the virulence of the bacterium, preparing it for infection of the next host. This photoreceptor protein is directly related to the bacterium's survival and replication within host macrophages. This chain is Blue-light-activated histidine kinase, found in Brucella ovis (strain ATCC 25840 / 63/290 / NCTC 10512).